Consider the following 583-residue polypeptide: Laccase-14 (583 aa).

A signal peptide spans 1–30; that stretch reads MAPSLGSGSTRILLIVSLLLCLRQQAVVDA. 2 consecutive Plastocyanin-like domains span residues 38-158 and 168-320; these read HVGN…PRPG and AEHT…YDDD. N-linked (GlcNAc...) asparagine glycosylation is found at Asn-41 and Asn-84. His-88 and His-90 together coordinate Cu cation. An N-linked (GlcNAc...) asparagine glycan is attached at Asn-126. Cu cation contacts are provided by His-137 and His-139. N-linked (GlcNAc...) asparagine glycans are attached at residues Asn-179, Asn-251, Asn-304, Asn-338, Asn-388, Asn-400, Asn-446, and Asn-464. Positions 426–567 constitute a Plastocyanin-like 3 domain; it reads DFPDRPPVMF…AMAFDVQDGP (142 aa). Positions 482, 485, 487, 546, 547, 548, and 552 each coordinate Cu cation.

The protein belongs to the multicopper oxidase family. It depends on Cu cation as a cofactor.

Its subcellular location is the secreted. The protein resides in the extracellular space. The protein localises to the apoplast. The enzyme catalyses 4 hydroquinone + O2 = 4 benzosemiquinone + 2 H2O. Functionally, lignin degradation and detoxification of lignin-derived products. The sequence is that of Laccase-14 (LAC14) from Oryza sativa subsp. japonica (Rice).